The chain runs to 276 residues: Putative aliphatic sulfonates transport permease protein SsuC (276 aa).

7 helical membrane-spanning segments follow: residues 32-52 (GLLLPAVIIAIWQVIGGLGVV), 54-74 (ATVLPTPVTIVLTFKELILSG), 87-107 (AALGFLLGAGLGLMIGILAGF), 119-141 (LQMLRTVPHLAVTPLFILWFGFD), 146-168 (ILLIALGAFFPVYINTFNGIRGV), 199-219 (ILLGIRLSLGIAWLGLVVAEL), and 242-262 (VFAGIIIFAVVGKLTDSFVRL). Residues 80-260 (LQISIYRAAL…VVGKLTDSFV (181 aa)) form the ABC transmembrane type-1 domain.

Belongs to the binding-protein-dependent transport system permease family. CysTW subfamily.

It is found in the cell membrane. Part of a binding-protein-dependent transport system for aliphatic sulfonates. Probably responsible for the translocation of the substrate across the membrane. This is Putative aliphatic sulfonates transport permease protein SsuC (ssuC) from Bacillus subtilis (strain 168).